A 125-amino-acid chain; its full sequence is Phosphoribosyl-AMP cyclohydrolase (125 aa).

D86 lines the Mg(2+) pocket. A Zn(2+)-binding site is contributed by C87. Mg(2+) is bound by residues D88 and D90. The Zn(2+) site is built by C103 and C110.

It belongs to the PRA-CH family. As to quaternary structure, homodimer. Mg(2+) is required as a cofactor. Zn(2+) serves as cofactor.

It is found in the cytoplasm. It carries out the reaction 1-(5-phospho-beta-D-ribosyl)-5'-AMP + H2O = 1-(5-phospho-beta-D-ribosyl)-5-[(5-phospho-beta-D-ribosylamino)methylideneamino]imidazole-4-carboxamide. The protein operates within amino-acid biosynthesis; L-histidine biosynthesis; L-histidine from 5-phospho-alpha-D-ribose 1-diphosphate: step 3/9. In terms of biological role, catalyzes the hydrolysis of the adenine ring of phosphoribosyl-AMP. The chain is Phosphoribosyl-AMP cyclohydrolase from Erythrobacter litoralis (strain HTCC2594).